The sequence spans 853 residues: Vacuolar protein sorting-associated protein 41 homolog (853 aa).

Positions 1 to 25 (MAEAEEQETESLEESTDESEEESEE) are enriched in acidic residues. The tract at residues 1 to 32 (MAEAEEQETESLEESTDESEEESEEEPKLKYE) is disordered. The segment at 1 to 539 (MAEAEEQETE…YLTLRHKDVF (539 aa)) is interaction with ARL8B. Residues 567–711 (VDMLLDNEDK…SIDKPPFITG (145 aa)) form a CHCR repeat. The RING-type; atypical zinc-finger motif lies at 790 to 838 (CESCLSPILPTDAAKPFSVVVFHCRHMFHKECLPMPSMNAPAQYCNICS).

This sequence belongs to the VPS41 family. As to quaternary structure, component of the putative homotypic fusion and vacuole protein sorting (HOPS) complex; the core of which composed of the class C Vps proteins VPS11, VPS16, VPS18 and VPS33A, is associated with VPS39 and VPS41. Interacts with RILP, MON1B. Interacts with ARL8B (GTP-bound form); involved in recruitment to lysosomes and probably hierarchial assembly of the HOPS complex at lysosomal membranes. In vitro can self-assemble into a lattice. Associates with adapter protein complex 3 (AP-3) and clathrin:AP-3 complexes. Interacts with STX17; this interaction is increased in the absence of TMEM39A. Interacts with ARL8B and PLEKHM1; the interaction mediates the recruitment of the HOPS complex to lysosomes. Interacts with RAB7, RAB2A and RAB2B. Interacts with RAB39A (GTP-bound) and RAB39B (GTP-bound); interaction with RAB39A leads to a functional HOPS complex that mediates autophagosome-lysosome membrane tethering.

It is found in the endosome membrane. Its subcellular location is the late endosome membrane. The protein resides in the early endosome membrane. It localises to the lysosome membrane. The protein localises to the golgi apparatus. It is found in the trans-Golgi network. Its subcellular location is the cytoplasmic vesicle. The protein resides in the clathrin-coated vesicle. It localises to the cytoplasm. The protein localises to the cytosol. In terms of biological role, plays a role in vesicle-mediated protein trafficking to lysosomal compartments including the endocytic membrane transport and autophagic pathways. Believed to act in part as a core component of the putative HOPS endosomal tethering complex is proposed to be involved in the Rab5-to-Rab7 endosome conversion probably implicating MON1A/B, and via binding SNAREs and SNARE complexes to mediate tethering and docking events during SNARE-mediated membrane fusion. The HOPS complex is proposed to be recruited to Rab7 on the late endosomal membrane and to regulate late endocytic, phagocytic and autophagic traffic towards lysosomes. Involved in homotypic vesicle fusions between late endosomes and in heterotypic fusions between late endosomes and lysosomes implicated in degradation of endocytosed cargo. Required for fusion of autophagosomes with lysosomes. Links the HOPS complex to endosomal via its association with RILP and to lysosomal membranes via its association with ARL8B, suggesting that these interactions may bring the compartments to close proximity for fusion. Involved in the direct trans-Golgi network to late endosomes transport of lysosomal membrane proteins independently of HOPS. Involved in sorting to the regulated secretory pathway presumably implicating the AP-3 adapter complex. May play a role in HOPS-independent function in the regulated secretory pathway. The protein is Vacuolar protein sorting-associated protein 41 homolog (Vps41) of Mus musculus (Mouse).